Here is a 131-residue protein sequence, read N- to C-terminus: Histone H2B.2 (131 aa).

Residues 1–19 (MSAKAEKKPASKAPAEKKP) show a composition bias toward basic and acidic residues. Residues 1–38 (MSAKAEKKPASKAPAEKKPAAKKTAPSSDGKKRTKARK) are disordered. Lysine 7 and lysine 8 each carry N6-acetyllysine; alternate. Residues lysine 7 and lysine 8 each participate in a glycyl lysine isopeptide (Lys-Gly) (interchain with G-Cter in SUMO); alternate cross-link. Position 11 is a phosphoserine (serine 11). Residue lysine 12 is modified to N6-acetyllysine. Position 17 is an N6-acetyllysine; alternate (lysine 17). A Glycyl lysine isopeptide (Lys-Gly) (interchain with G-Cter in SUMO); alternate cross-link involves residue lysine 17. Lysine 18 is covalently cross-linked (Glycyl lysine isopeptide (Lys-Gly) (interchain with G-Cter in SUMO)). Lysine 124 participates in a covalent cross-link: Glycyl lysine isopeptide (Lys-Gly) (interchain with G-Cter in ubiquitin).

The protein belongs to the histone H2B family. As to quaternary structure, the nucleosome is a histone octamer containing two molecules each of H2A, H2B, H3 and H4 assembled in one H3-H4 heterotetramer and two H2A-H2B heterodimers. The octamer wraps approximately 147 bp of DNA. Monoubiquitinated by the UBC2-BRE1 complex to form H2BK123ub1. H2BK123ub1 gives a specific tag for epigenetic transcriptional activation and is also prerequisite for H3K4me and H3K79me formation. H2BK123ub1 also modulates the formation of double-strand breaks during meiosis and is a prerequisite for DNA-damage checkpoint activation. Post-translationally, phosphorylated by STE20 to form H2BS10ph during progression through meiotic prophase. May be correlated with chromosome condensation. In terms of processing, acetylated by GCN5 to form H2BK11ac and H2BK16ac. H2BK16ac can also be formed by ESA1. Acetylation of N-terminal lysines and particularly formation of H2BK11acK16ac has a positive effect on transcription. Sumoylation to form H2BK6su or H2BK7su, and probably also H2BK16su or H2BK17su, occurs preferentially near the telomeres and represses gene transcription.

It localises to the nucleus. It is found in the chromosome. Functionally, core component of nucleosome. Nucleosomes wrap and compact DNA into chromatin, limiting DNA accessibility to the cellular machineries which require DNA as a template. Histones thereby play a central role in transcription regulation, DNA repair, DNA replication and chromosomal stability. DNA accessibility is regulated via a complex set of post-translational modifications of histones, also called histone code, and nucleosome remodeling. This is Histone H2B.2 (HTB2) from Candida glabrata (strain ATCC 2001 / BCRC 20586 / JCM 3761 / NBRC 0622 / NRRL Y-65 / CBS 138) (Yeast).